Consider the following 722-residue polypeptide: Zinc finger protein 219 (722 aa).

The disordered stretch occupies residues 1–21 (MEGSRPRAPSGHLAPSPPAFD). Ser-16 bears the Phosphoserine mark. 2 C2H2-type zinc fingers span residues 57-79 (FPCP…LRAH) and 85-107 (FQCP…LRTH). Positions 137–160 (ARSSGGMQATPATEGLARPQAPSS) are disordered. 2 C2H2-type zinc fingers span residues 163–186 (FRCP…HILH) and 189–212 (WKCG…LTAH). The interval 215–275 (PERPLAATSA…EEPPAPPEFR (61 aa)) is disordered. Composition is skewed to pro residues over residues 225–247 (APPP…PQPE) and 259–272 (TPAP…PAPP). 2 C2H2-type zinc fingers span residues 274–296 (FRCQ…MRKH) and 302–324 (HACP…MKVH). Residues 384–495 (LRAGEGRPNG…GTRPEGGRGA (112 aa)) form a disordered region. Gly residues predominate over residues 390–404 (RPNGEGAEPGPGRSF). A compositionally biased stretch (acidic residues) spans 425–438 (EPEEEEEVVEAEEE). The span at 463–477 (SASAAGAQARSTATQ) shows a compositional bias: low complexity. 2 consecutive C2H2-type zinc fingers follow at residues 498 to 520 (KDCP…LRVH) and 526 to 548 (YKCP…LQRH). Disordered stretches follow at residues 542 to 648 (KYHL…LHRC) and 668 to 722 (HHSR…GQER). Residues 558–568 (PGPPPEPPPPS) show a composition bias toward pro residues. Positions 634–643 (GPGGEAGPGG) are enriched in gly residues. A C2H2-type 9 zinc finger spans residues 646 to 668 (HRCLFCPFATGAPELMALHLQVH). Basic residues predominate over residues 668–677 (HHSRRARGRR). Position 692 is a phosphoserine (Ser-692). Thr-695 carries the phosphothreonine modification. Ser-698 carries the post-translational modification Phosphoserine.

It belongs to the krueppel C2H2-type zinc-finger protein family. Interacts with SOX9 (via C-terminus). Ubiquitous.

The protein localises to the nucleus. In terms of biological role, transcriptional regulator. Recognizes and binds 2 copies of the core DNA sequence motif 5'-GGGGG-3'. Binds to the HMGN1 promoter and may repress HMGN1 expression. Regulates SNCA expression in primary cortical neurons. Binds to the COL2A1 promoter and activates COL2A1 expression, as part of a complex with SOX9. Plays a role in chondrocyte differentiation. This Homo sapiens (Human) protein is Zinc finger protein 219 (ZNF219).